Here is a 506-residue protein sequence, read N- to C-terminus: MKEYQVYLERARSRQQDFLYPLIFREYIYGLAYSQNFNRSIFVENLGYDNKYSLLIVKRLITRMYQQNHLIISANDSNKNPFLGYNKNFYSQIISEGFAIVVEIPFFLELSSSLEEAEIIKSYKNLRSIHSIFPFLEDKLTHLNYVSDIRIPYPIHLEILVQILRYWVKDAPFFHLLRLFLYHFCNWNSFITTKKSISTFSKSNPRLFLFLYNFYVCEYESIFLFLRNKSSHLRLKSFSVFFERIFFYAKREHLVEVFAKDFSYTLTFFKDPLIHYVRYQGKCILASKNAPFLMNKWKHYFIHLWQGFFDVWSQPRTININQLSEHSFQLLGYFLNVRLNRSVVRSQMLQNTFLIEIVSKKLDIIVPIIPLIRSLAKAKFCNVLGHPISKPVWADSSDFDIIDRFLRICRNLSHYYNGSSKKKSLYQIKYILRLSCIKTLACKHKSTVRAFLKRSGSEELLEEFFTEEEEILSLIFPRDSSTLHRLNRNRIWYLDILFSNDLVNDE.

The protein belongs to the intron maturase 2 family. MatK subfamily.

The protein localises to the plastid. Its subcellular location is the chloroplast. In terms of biological role, usually encoded in the trnK tRNA gene intron. Probably assists in splicing its own and other chloroplast group II introns. The chain is Maturase K from Melilotus albus (White sweet clover).